A 153-amino-acid polypeptide reads, in one-letter code: Endoribonuclease YbeY (153 aa).

Zn(2+)-binding residues include histidine 114, histidine 118, and histidine 124.

It belongs to the endoribonuclease YbeY family. It depends on Zn(2+) as a cofactor.

Its subcellular location is the cytoplasm. Its function is as follows. Single strand-specific metallo-endoribonuclease involved in late-stage 70S ribosome quality control and in maturation of the 3' terminus of the 16S rRNA. This chain is Endoribonuclease YbeY, found in Finegoldia magna (strain ATCC 29328 / DSM 20472 / WAL 2508) (Peptostreptococcus magnus).